Here is a 120-residue protein sequence, read N- to C-terminus: Protein BEX4 (120 aa).

The segment at 1-54 is disordered; sequence MESKEELAANNLNGENAQQENEGGEQAPTQNEEESRHLGGGEGQKPGGNIRRGR. A compositionally biased stretch (low complexity) spans 8–27; it reads AANNLNGENAQQENEGGEQA. Residues 31–90 are interaction with SIRT2; that stretch reads NEEESRHLGGGEGQKPGGNIRRGRVRRLVPNFRWAIPNRHIEHNEARDDVERFVGQMMEI. Positions 31–120 are interaction with alpha-tubulin; it reads NEEESRHLGG…DNHYDFCLIP (90 aa). Residue Cys-117 participates in Zn(2+) binding.

The protein belongs to the BEX family. Interacts with alpha-tubulin. Interacts with SIRT2. In terms of processing, ubiquitinated and degraded by the proteasome. Very high expression in heart, skeletal muscle, liver, and kidney. The levels of expression are uniform throughout the brain.

The protein localises to the cytoplasm. Its subcellular location is the cytoskeleton. The protein resides in the spindle pole. It localises to the nucleus. May play a role in microtubule deacetylation by negatively regulating the SIRT2 deacetylase activity toward alpha-tubulin and thereby participate in the control of cell cycle progression and genomic stability. In absence of reductive stress, acts as a pseudosubstrate for the CRL2(FEM1B) complex: associates with FEM1B via zinc, thereby preventing association between FEM1B and its substrates. In Homo sapiens (Human), this protein is Protein BEX4.